We begin with the raw amino-acid sequence, 94 residues long: Large ribosomal subunit protein bL25 (94 aa).

The protein belongs to the bacterial ribosomal protein bL25 family. As to quaternary structure, part of the 50S ribosomal subunit; part of the 5S rRNA/L5/L18/L25 subcomplex. Contacts the 5S rRNA. Binds to the 5S rRNA independently of L5 and L18.

Its function is as follows. This is one of the proteins that binds to the 5S RNA in the ribosome where it forms part of the central protuberance. In Escherichia coli (strain K12 / DH10B), this protein is Large ribosomal subunit protein bL25.